The sequence spans 391 residues: Phosphoglycerate kinase (391 aa).

Residues 21 to 23 (DLN), Arg-36, 59 to 62 (HLGR), Arg-113, and Arg-146 contribute to the substrate site. ATP-binding positions include Lys-197, Glu-319, and 345–348 (GGDT).

This sequence belongs to the phosphoglycerate kinase family. Monomer.

The protein localises to the cytoplasm. The enzyme catalyses (2R)-3-phosphoglycerate + ATP = (2R)-3-phospho-glyceroyl phosphate + ADP. Its pathway is carbohydrate degradation; glycolysis; pyruvate from D-glyceraldehyde 3-phosphate: step 2/5. In Shewanella sp. (strain MR-7), this protein is Phosphoglycerate kinase.